An 866-amino-acid chain; its full sequence is Probable outer membrane usher protein ElfC (866 aa).

Positions 1–35 (MYRTHRQHSLLSSGGVPSFIGGLVVFVSAAFNAQA) are cleaved as a signal peptide.

The protein belongs to the fimbrial export usher family.

The protein resides in the cell outer membrane. In terms of biological role, part of the elfADCG-ycbUVF fimbrial operon, which promotes adhesion of bacteria to different abiotic surfaces. Could be involved in the export and assembly of the ElfA fimbrial subunits across the outer membrane. The sequence is that of Probable outer membrane usher protein ElfC (elfC) from Escherichia coli (strain K12).